The sequence spans 201 residues: Recombination protein RecR (201 aa).

The C4-type zinc finger occupies 60–75 (CQICGNIDTRDPCTIC). Residues 83–178 (TLLVVVETVA…KITRLAHGVP (96 aa)) form the Toprim domain.

This sequence belongs to the RecR family.

In terms of biological role, may play a role in DNA repair. It seems to be involved in an RecBC-independent recombinational process of DNA repair. It may act with RecF and RecO. This is Recombination protein RecR from Beijerinckia indica subsp. indica (strain ATCC 9039 / DSM 1715 / NCIMB 8712).